We begin with the raw amino-acid sequence, 150 residues long: Urease accessory protein UreE (150 aa).

It belongs to the UreE family.

Its subcellular location is the cytoplasm. Its function is as follows. Involved in urease metallocenter assembly. Binds nickel. Probably functions as a nickel donor during metallocenter assembly. This Streptococcus vestibularis protein is Urease accessory protein UreE.